Here is an 891-residue protein sequence, read N- to C-terminus: Shieldin complex subunit 2 (891 aa).

The segment at 1 to 61 is sufficient for interaction with SHLD3 and MAD2L2; the sequence is MSQGSQVHIF…AGDQEFKNLE (61 aa). An interaction with ASTE1 region spans residues 1–542; the sequence is MSQGSQVHIF…TYVSTKHSYL (542 aa). Disordered regions lie at residues 184-222, 260-294, and 333-357; these read MSTG…KASD, NMEA…NEQS, and NEEN…WSCK. Residues 192–222 are compositionally biased toward basic and acidic residues; the sequence is PTGHRERQSQESFSDTRCEPQSEGAVRKASD. 2 stretches are compositionally biased toward polar residues: residues 260–271 and 342–354; these read NMEAEPTGSQGV and LCSS…NRSW. Positions 695–866 are mediates interaction with SHLD1; that stretch reads KYSGVVLIKA…QQDFSLLDFC (172 aa).

This sequence belongs to the SHLD2 family. As to quaternary structure, component of the shieldin complex, consisting of SHLD1, SHLD2, SHLD3 and MAD2L2/REV7. Within the complex, SHLD2 forms a scaffold which interacts with a SHLD3-MAD2L2 subcomplex via its N-terminus, and with SHLD1 via its C-terminus. Interacts with TP53BP1. Interacts with RIF1. Interacts with ASTE1.

The protein localises to the chromosome. Component of the shieldin complex, which plays an important role in repair of DNA double-stranded breaks (DSBs). During G1 and S phase of the cell cycle, the complex functions downstream of TP53BP1 to promote non-homologous end joining (NHEJ) and suppress DNA end resection. Mediates various NHEJ-dependent processes including immunoglobulin class-switch recombination, and fusion of unprotected telomeres. The protein is Shieldin complex subunit 2 of Mus musculus (Mouse).